Consider the following 236-residue polypeptide: Cancer/testis antigen 55 (236 aa).

The segment at 57-84 (RSSADVETGDNPLKAEPNLPAAVEEQSP) is disordered.

As to quaternary structure, interacts with GABARAP; this interaction may be important for GABARAP protein stability. Interacts with LAMP2; this interaction may be important for LAMP2 protein stability. In terms of tissue distribution, expressed in spermatozoa (at protein level).

It is found in the cytoplasm. The protein resides in the cytoplasmic vesicle. Its subcellular location is the secretory vesicle. It localises to the acrosome. The protein localises to the cell projection. It is found in the cilium. The protein resides in the flagellum. Functionally, plays a role in spermatogenesis, possibly acting in the regulation of the autophagy pathway. In Mus musculus (Mouse), this protein is Cancer/testis antigen 55 (Ct55).